Consider the following 85-residue polypeptide: Protein U62 (85 aa).

Belongs to the herpesviridae UL91 family.

The sequence is that of Protein U62 (U62) from Homo sapiens (Human).